We begin with the raw amino-acid sequence, 238 residues long: Valine-rich protein (238 aa).

Positions 1 to 16 (MQAVLLVVALFGAALA) are cleaved as a signal peptide.

As to expression, prismatic layer of shell (at protein level). Expressed primarily in the mantle with highest level in the mantle edge and lower level in the mantle pallium.

It is found in the secreted. This is Valine-rich protein from Pinctada maxima (Silver-lipped pearl oyster).